The sequence spans 154 residues: uncharacterized protein (154 aa).

The protein resides in the mitochondrion. This is an uncharacterized protein from Marchantia polymorpha (Common liverwort).